Here is a 1062-residue protein sequence, read N- to C-terminus: Inversin (1062 aa).

ANK repeat units follow at residues 13–42 (SLASQVHAAAVNGDKGALQRLIVGNSALRD), 47–76 (FGRTPLMYCVLADRVDCADALLKAGADVNK), 80–110 (SRRTALHLAAQKGNYRFMKLLLTRRANWMQK), 113–144 (EEMTPLHLSTRHRSPKCLALLLKFMAPGEVDT), 148–177 (NKQTALHWSAYYNNPEHAKLLIKHDSNIGI), 181–213 (EGKIPLHWAANHKDPSAVHTVRCILDAAPTESL), 220–250 (EGRTPLHFAVADGNLTVVDVLTSYESCNITS), 254–283 (LFRTPLHWAALLGHAQIVHLLLERNKSGTI), 288–317 (QGATPLHYAAQSNFAETVKVFLQHPSVKDD), 321–350 (EGRTSFMWAAGKGNDDVLRTMLSLKSDIDI), 356–385 (YGGTALHAAALSGHVSTVKLLLDNDAQVDA), 389–418 (MKHTPLFRACEMGHRDVIQTLIKGGARVDL), 422–451 (DGHSLLHWAALGGNADVCQILIENKINPNV), 455–484 (AGRTPLQCAAYGGYINCMAVLMENNADPNI), 488–517 (EGRTALHWSCNNGYLDAIKLLLDFAAFPNQ), and 523–553 (ERYTPLDYALLGERHEVIQFMLEHGALSIAA). At Asn75 the chain carries 3-hydroxyasparagine. A D-box 1 motif is present at residues 490 to 498 (RTALHWSCN). The IQ 1 domain occupies 555–584 (QDIAAFKIQAVYKGYKVRKAFRDRKNLLMK). A compositionally biased stretch (basic and acidic residues) spans 589-608 (RKDAAAKKREEENKRKEAEQ). The tract at residues 589–849 (RKDAAAKKRE…QDKLIGGVSS (261 aa)) is disordered. Polar residues-rich tracts occupy residues 636-658 (QNEGSKQDATPSKQPPASHTVQS) and 676-689 (QGDSSIDLQGTASR). Positions 690–700 (KPSETPIEHCR) are enriched in basic and acidic residues. The segment covering 713–724 (GGNSSKNQGTSS) has biased composition (polar residues). Basic and acidic residues-rich tracts occupy residues 725–741 (VEKRRGETNGKHRRCEE) and 775–788 (DHPRKPNKRQDRAA). The D-box 2 motif lies at 907-915 (RKELFRRKN). An IQ 2 domain is found at 914–943 (KNKAAAVIQRAWRSYQLRKHLSRLLHLKQL). Residues 1042–1062 (RSKKFSYNLQPSSQSKNKPKL) are disordered. Positions 1046-1062 (FSYNLQPSSQSKNKPKL) are enriched in polar residues.

Interacts with microtubules. Interacts with NPHP1. Interacts with DVL1, PRICKLE (PRICKLE1 or PRICKLE2) and Strabismus (VANGL1 or VANGL2). Binds calmodulin via its IQ domains. Interacts with APC2. Interacts with alpha-, beta-, and gamma-catenin. Interacts with N-cadherin (CDH2). Interacts with NPHP3. Interacts with IQCB1; the interaction likely requires additional interactors. Component of a complex containing at least ANKS6, INVS, NEK8 and NPHP3. ANKS6 may organize complex assembly by linking INVS and NPHP3 to NEK8 and INVS may target the complex to the proximal ciliary axoneme. May be ubiquitinated via its interaction with APC2. In terms of processing, hydroxylated at Asn-75, most probably by HIF1AN. In terms of tissue distribution, strongly expressed in the primary cilia of renal cells, especially in the varicosities, swellings observed in the cilia. Localizes in the node monocilia and in other 9+0 monocilia, including those of kidney epithelial cells and the pituitary gland, but it does not localize to 9+2 cilia (at protein level). In adult, it is expressed at high level in liver and kidney. Weakly or not expressed in other tissues.

The protein localises to the cytoplasm. Its subcellular location is the cytoskeleton. It is found in the membrane. The protein resides in the nucleus. It localises to the perinuclear region. The protein localises to the spindle. Its function is as follows. Required for normal renal development and establishment of left-right axis. Probably acts as a molecular switch between different Wnt signaling pathways. Inhibits the canonical Wnt pathway by targeting cytoplasmic disheveled (DVL1) for degradation by the ubiquitin-proteasome. This suggests that it is required in renal development to oppose the repression of terminal differentiation of tubular epithelial cells by Wnt signaling. Involved in the organization of apical junctions in kidney cells together with NPHP1, NPHP4 and RPGRIP1L/NPHP8. Does not seem to be strictly required for ciliogenesis. The protein is Inversin (Invs) of Mus musculus (Mouse).